The chain runs to 91 residues: Cell division topological specificity factor (91 aa).

This sequence belongs to the MinE family.

In terms of biological role, prevents the cell division inhibition by proteins MinC and MinD at internal division sites while permitting inhibition at polar sites. This ensures cell division at the proper site by restricting the formation of a division septum at the midpoint of the long axis of the cell. The chain is Cell division topological specificity factor from Caldanaerobacter subterraneus subsp. tengcongensis (strain DSM 15242 / JCM 11007 / NBRC 100824 / MB4) (Thermoanaerobacter tengcongensis).